The primary structure comprises 918 residues: Plasma membrane ATPase 1 (918 aa).

A compositionally biased stretch (low complexity) spans 1–18 (MTDTSSSSSSSSASSVSA). The tract at residues 1 to 84 (MTDTSSSSSS…VPEEYLQTDP (84 aa)) is disordered. The Cytoplasmic portion of the chain corresponds to 1–115 (MTDTSSSSSS…ADEKESLVVK (115 aa)). Over residues 33–47 (AASESSDDDDIDALI) the composition is skewed to acidic residues. A Phosphoserine modification is found at Ser61. A helical membrane pass occupies residues 116 to 136 (FVMFFVGPIQFVMEAAAILAA). The Extracellular portion of the chain corresponds to 137–140 (GLSD). The chain crosses the membrane as a helical span at residues 141-160 (WVDFGVICGLLMLNAGVGFV). The Cytoplasmic segment spans residues 161 to 291 (QEFQAGSIVD…GQGHFTEVLN (131 aa)). At Thr175 the chain carries Phosphothreonine. A Glycyl lysine isopeptide (Lys-Gly) (interchain with G-Cter in ubiquitin) cross-link involves residue Lys252. The chain crosses the membrane as a helical span at residues 292–313 (GIGIILLVLVIATLLLVWTACF). The Extracellular portion of the chain corresponds to 314–325 (YRTNGIVRILRY). The helical transmembrane segment at 326-347 (TLGITIIGVPVGLPAVVTTTMA) threads the bilayer. Over 348–719 (VGAAYLAKKQ…IAILDNSLDI (372 aa)) the chain is Cytoplasmic. Asp378 serves as the catalytic 4-aspartylphosphate intermediate. A Glycyl lysine isopeptide (Lys-Gly) (interchain with G-Cter in ubiquitin) cross-link involves residue Lys555. Positions 634 and 638 each coordinate Mg(2+). Residues 720-738 (DLIVFIAIFADVATLAIAY) traverse the membrane as a helical segment. Residues 739–754 (DNAPYSPKPVKWNLPR) are Extracellular-facing. A helical transmembrane segment spans residues 755-774 (LWGMSIILGIVLAIGSWITL). The Cytoplasmic portion of the chain corresponds to 775–824 (TTMFLPKGGIIQNFGAMNGIMFLQISLTENWLIFITRAAGPFWSSIPSWQ). A helical membrane pass occupies residues 825 to 845 (LAGAVFAVDIIATMFTLFGWW). Residues 846 to 857 (SENWTDIVTVVR) lie on the Extracellular side of the membrane. The chain crosses the membrane as a helical span at residues 858-874 (VWIWSIGIFCVLGGFYY). Topologically, residues 875-918 (EMSTSEAFDRLMNGKPMKEKKSTRSVEDFMAAMQRVSTQHEKET) are cytoplasmic. The residue at position 911 (Ser911) is a Phosphoserine. 2 positions are modified to phosphothreonine: Thr912 and Thr918.

The protein belongs to the cation transport ATPase (P-type) (TC 3.A.3) family. Type IIIA subfamily. As to quaternary structure, interacts with its cargot receptor EXP1 for its transport within the cell and maturation. Post-translationally, phosphorylated on multiple Ser and Thr residues.

The protein localises to the cell membrane. The enzyme catalyses ATP + H2O + H(+)(in) = ADP + phosphate + 2 H(+)(out). Functionally, the plasma membrane ATPase of plants and fungi is a hydrogen ion pump. The proton gradient it generates drives the active transport of nutrients by H(+)-symport. The resulting external acidification and/or internal alkinization may mediate growth responses. This Saccharomyces cerevisiae (strain ATCC 204508 / S288c) (Baker's yeast) protein is Plasma membrane ATPase 1 (PMA1).